The following is a 314-amino-acid chain: Homoserine kinase (314 aa).

95–105 contacts ATP; the sequence is PHSRGLGSSAS.

This sequence belongs to the GHMP kinase family. Homoserine kinase subfamily.

It is found in the cytoplasm. It catalyses the reaction L-homoserine + ATP = O-phospho-L-homoserine + ADP + H(+). It participates in amino-acid biosynthesis; L-threonine biosynthesis; L-threonine from L-aspartate: step 4/5. Its function is as follows. Catalyzes the ATP-dependent phosphorylation of L-homoserine to L-homoserine phosphate. The chain is Homoserine kinase from Mycobacterium ulcerans (strain Agy99).